The sequence spans 1010 residues: Trifunctional purine biosynthetic protein adenosine-3 (1010 aa).

Ala2 is subject to N-acetylalanine. The ATP-grasp domain occupies 111–318 (KEFMDRHGIS…LYEVIQSILD (208 aa)). ATP is bound by residues 190-193 (EELL), Glu197, Arg220, and Asn229. 2 residues coordinate Mg(2+): Glu288 and Asn290. N6-acetyllysine is present on Lys350. The interval 434–809 (GLTYKESGVD…HFSVQPKKAR (376 aa)) is AIRS domain. The residue at position 440 (Ser440) is a Phosphoserine. Thr682 bears the Phosphothreonine mark. Ser802 carries the phosphoserine modification. The tract at residues 810–1010 (VAVLISGTGS…NGRICWVTED (201 aa)) is GART domain. N(1)-(5-phospho-beta-D-ribosyl)glycinamide is bound at residue 818–820 (GSN). (6R)-10-formyltetrahydrofolate-binding positions include Arg871, 896–899 (MRIL), and Asn913. His915 functions as the Proton donor in the catalytic mechanism. 947–951 (AEDVD) contacts (6R)-10-formyltetrahydrofolate. Position 977–980 (977–980 (KLAE)) interacts with N(1)-(5-phospho-beta-D-ribosyl)glycinamide.

This sequence in the N-terminal section; belongs to the GARS family. In the central section; belongs to the AIR synthase family. It in the C-terminal section; belongs to the GART family. Homodimer. It depends on Mg(2+) as a cofactor. Requires Mn(2+) as cofactor.

The enzyme catalyses 5-phospho-beta-D-ribosylamine + glycine + ATP = N(1)-(5-phospho-beta-D-ribosyl)glycinamide + ADP + phosphate + H(+). The catalysed reaction is 2-formamido-N(1)-(5-O-phospho-beta-D-ribosyl)acetamidine + ATP = 5-amino-1-(5-phospho-beta-D-ribosyl)imidazole + ADP + phosphate + H(+). It carries out the reaction N(1)-(5-phospho-beta-D-ribosyl)glycinamide + (6R)-10-formyltetrahydrofolate = N(2)-formyl-N(1)-(5-phospho-beta-D-ribosyl)glycinamide + (6S)-5,6,7,8-tetrahydrofolate + H(+). It functions in the pathway purine metabolism; IMP biosynthesis via de novo pathway; 5-amino-1-(5-phospho-D-ribosyl)imidazole from N(2)-formyl-N(1)-(5-phospho-D-ribosyl)glycinamide: step 2/2. It participates in purine metabolism; IMP biosynthesis via de novo pathway; N(1)-(5-phospho-D-ribosyl)glycinamide from 5-phospho-alpha-D-ribose 1-diphosphate: step 2/2. The protein operates within purine metabolism; IMP biosynthesis via de novo pathway; N(2)-formyl-N(1)-(5-phospho-D-ribosyl)glycinamide from N(1)-(5-phospho-D-ribosyl)glycinamide (10-formyl THF route): step 1/1. Functionally, trifunctional enzyme that catalyzes three distinct reactions as part of the 'de novo' inosine monophosphate biosynthetic pathway. The protein is Trifunctional purine biosynthetic protein adenosine-3 (GART) of Bos taurus (Bovine).